Here is a 207-residue protein sequence, read N- to C-terminus: Thiamine-phosphate synthase (207 aa).

Residues 41 to 45 (QLRLK) and Asn73 contribute to the 4-amino-2-methyl-5-(diphosphooxymethyl)pyrimidine site. 2 residues coordinate Mg(2+): Asp74 and Asp93. Thr111 contributes to the 4-amino-2-methyl-5-(diphosphooxymethyl)pyrimidine binding site. 138 to 140 (TKT) lines the 2-[(2R,5Z)-2-carboxy-4-methylthiazol-5(2H)-ylidene]ethyl phosphate pocket. Lys141 lines the 4-amino-2-methyl-5-(diphosphooxymethyl)pyrimidine pocket. Gly168 contacts 2-[(2R,5Z)-2-carboxy-4-methylthiazol-5(2H)-ylidene]ethyl phosphate.

It belongs to the thiamine-phosphate synthase family. It depends on Mg(2+) as a cofactor.

It carries out the reaction 2-[(2R,5Z)-2-carboxy-4-methylthiazol-5(2H)-ylidene]ethyl phosphate + 4-amino-2-methyl-5-(diphosphooxymethyl)pyrimidine + 2 H(+) = thiamine phosphate + CO2 + diphosphate. It catalyses the reaction 2-(2-carboxy-4-methylthiazol-5-yl)ethyl phosphate + 4-amino-2-methyl-5-(diphosphooxymethyl)pyrimidine + 2 H(+) = thiamine phosphate + CO2 + diphosphate. The enzyme catalyses 4-methyl-5-(2-phosphooxyethyl)-thiazole + 4-amino-2-methyl-5-(diphosphooxymethyl)pyrimidine + H(+) = thiamine phosphate + diphosphate. The protein operates within cofactor biosynthesis; thiamine diphosphate biosynthesis; thiamine phosphate from 4-amino-2-methyl-5-diphosphomethylpyrimidine and 4-methyl-5-(2-phosphoethyl)-thiazole: step 1/1. Condenses 4-methyl-5-(beta-hydroxyethyl)thiazole monophosphate (THZ-P) and 2-methyl-4-amino-5-hydroxymethyl pyrimidine pyrophosphate (HMP-PP) to form thiamine monophosphate (TMP). This Pelagibacter ubique (strain HTCC1062) protein is Thiamine-phosphate synthase.